A 208-amino-acid polypeptide reads, in one-letter code: Putative 3-methyladenine DNA glycosylase (208 aa).

This sequence belongs to the DNA glycosylase MPG family.

The protein is Putative 3-methyladenine DNA glycosylase of Lactobacillus delbrueckii subsp. bulgaricus (strain ATCC BAA-365 / Lb-18).